The chain runs to 244 residues: Phosphoadenosine 5'-phosphosulfate reductase (244 aa).

Residue Cys239 is the Nucleophile; cysteine thiosulfonate intermediate of the active site.

Belongs to the PAPS reductase family. CysH subfamily.

It is found in the cytoplasm. The catalysed reaction is [thioredoxin]-disulfide + sulfite + adenosine 3',5'-bisphosphate + 2 H(+) = [thioredoxin]-dithiol + 3'-phosphoadenylyl sulfate. Its pathway is sulfur metabolism; hydrogen sulfide biosynthesis; sulfite from sulfate: step 3/3. Functionally, catalyzes the formation of sulfite from phosphoadenosine 5'-phosphosulfate (PAPS) using thioredoxin as an electron donor. This is Phosphoadenosine 5'-phosphosulfate reductase from Pectobacterium atrosepticum (strain SCRI 1043 / ATCC BAA-672) (Erwinia carotovora subsp. atroseptica).